Here is a 454-residue protein sequence, read N- to C-terminus: Pyrimidine/purine nucleotide 5'-monophosphate nucleosidase (454 aa).

The protein belongs to the LOG family.

It catalyses the reaction a pyrimidine ribonucleoside 5'-phosphate + H2O = a pyrimidine nucleobase + D-ribose 5-phosphate. The enzyme catalyses AMP + H2O = adenine + D-ribose 5-phosphate. It carries out the reaction GMP + H2O = guanine + D-ribose 5-phosphate. The catalysed reaction is CMP + H2O = cytosine + D-ribose 5-phosphate. It catalyses the reaction IMP + H2O = hypoxanthine + D-ribose 5-phosphate. The enzyme catalyses UMP + H2O = D-ribose 5-phosphate + uracil. It carries out the reaction dTMP + H2O = 2-deoxy-D-ribose 5-phosphate + thymine. Its function is as follows. Catalyzes the hydrolysis of the N-glycosidic bond of diverse pyrimidine and purine nucleotide 5'-monophosphates, to form ribose 5-phosphate and the corresponding free base. Can use AMP, GMP, IMP, CMP, dTMP and UMP as substrates. Cannot catalyze the reverse reactions. May contribute to nucleoside pool homeostasis by degrading excess nucleotides and feeding back the ribose moiety to catabolism. This chain is Pyrimidine/purine nucleotide 5'-monophosphate nucleosidase, found in Escherichia coli O157:H7.